Consider the following 309-residue polypeptide: Probable nitrogen assimilation transcriptional activator (309 aa).

Residues 1–57 form the HTH lysR-type domain; sequence MRLEQLQAFLKVAELGSFQQAALQSEVTQSTISRQIQGLESALKCQLFHRGAQAKLT. The segment at residues 18-38 is a DNA-binding region (H-T-H motif); sequence FQQAALQSEVTQSTISRQIQG.

Belongs to the LysR transcriptional regulatory family.

Functionally, seems to regulate utilization of fixed nitrogen by controlling the expression of a certain gene(s) involved in nitrogen metabolism. This is Probable nitrogen assimilation transcriptional activator (ntcB) from Synechocystis sp. (strain ATCC 27184 / PCC 6803 / Kazusa).